We begin with the raw amino-acid sequence, 213 residues long: UPF0111 protein TM_0914 (213 aa).

Belongs to the UPF0111 family.

The chain is UPF0111 protein TM_0914 from Thermotoga maritima (strain ATCC 43589 / DSM 3109 / JCM 10099 / NBRC 100826 / MSB8).